A 293-amino-acid polypeptide reads, in one-letter code: Sphingolipid C4-hydroxylase sur2 (293 aa).

The next 3 helical transmembrane spans lie at 18-38, 68-88, and 127-147; these read LVSP…LHYI, AVLF…MFEG, and FIVP…WQYF. A Fatty acid hydroxylase domain is found at 136 to 270; sequence FAFFIIDSWQ…FTFWDHVLGT (135 aa).

This sequence belongs to the sterol desaturase family.

The protein localises to the endoplasmic reticulum membrane. Its pathway is membrane lipid metabolism; sphingolipid biosynthesis. Functionally, required for hydroxylation of C-4 in the sphingoid moiety of ceramide. Involved in the response to syringomycin. This Schizosaccharomyces pombe (strain 972 / ATCC 24843) (Fission yeast) protein is Sphingolipid C4-hydroxylase sur2 (sur2).